The sequence spans 251 residues: Zinc import ATP-binding protein ZnuC (251 aa).

In terms of domain architecture, ABC transporter spans 5 to 220; it reads VSLENVSVSF…PEFISMFGPR (216 aa). 37 to 44 lines the ATP pocket; the sequence is GPNGAGKS.

The protein belongs to the ABC transporter superfamily. Zinc importer (TC 3.A.1.15.5) family. As to quaternary structure, the complex is composed of two ATP-binding proteins (ZnuC), two transmembrane proteins (ZnuB) and a solute-binding protein (ZnuA).

Its subcellular location is the cell inner membrane. It catalyses the reaction Zn(2+)(out) + ATP(in) + H2O(in) = Zn(2+)(in) + ADP(in) + phosphate(in) + H(+)(in). Its function is as follows. Part of the ABC transporter complex ZnuABC involved in zinc import. Responsible for energy coupling to the transport system. The chain is Zinc import ATP-binding protein ZnuC from Shigella flexneri serotype 5b (strain 8401).